The sequence spans 1391 residues: Nuclear pore complex protein Nup155 (1391 aa).

S526 is a glycosylation site (O-linked (GlcNAc) serine). Disordered regions lie at residues S604 to P630 and Q985 to S1012. A Phosphoserine modification is found at S1057.

It belongs to the non-repetitive/WGA-negative nucleoporin family. In terms of assembly, interacts with GLE1 and NUP35/NUP53. Able to form a heterotrimer with GLE1 and NUP42 in vitro. Forms a complex with NUP35, NUP93, NUP205 and lamin B. Post-translationally, phosphorylated. Phosphorylation and dephosphorylation may be important for the function of NUP155 and may play a role in the reversible disassembly of the nuclear pore complex during mitosis. In terms of processing, disulfide-linked to NUP62. The inner channel of the NPC has a different redox environment from the cytoplasm and allows the formation of interchain disulfide bonds between some nucleoporins, the significant increase of these linkages upon oxidative stress reduces the permeability of the NPC.

Its subcellular location is the nucleus. It is found in the nuclear pore complex. The protein resides in the nucleus membrane. Its function is as follows. Essential component of nuclear pore complex. Could be essessential for embryogenesis. Nucleoporins may be involved both in binding and translocating proteins during nucleocytoplasmic transport. This chain is Nuclear pore complex protein Nup155 (Nup155), found in Mus musculus (Mouse).